The sequence spans 251 residues: Sugar fermentation stimulation protein homolog (251 aa).

This sequence belongs to the SfsA family.

This is Sugar fermentation stimulation protein homolog from Prochlorococcus marinus (strain SARG / CCMP1375 / SS120).